The primary structure comprises 427 residues: Peptidyl-prolyl cis-trans isomerase sig-7 (427 aa).

Residues 6–161 (ETTLGDLIID…KDIRISHTIV (156 aa)) form the PPIase cyclophilin-type domain. Positions 195–227 (DEKEDEDEGKTAEEIAEELQQREMAEQAQILEM) form a coiled coil. The RRM domain maps to 241 to 319 (NVLFVCKLNP…RRIHVDFSQS (79 aa)). Residues 322–334 (QNYKYKPKSQQQE) are compositionally biased toward polar residues. Residues 322–427 (QNYKYKPKSQ…RSPDRRRDRR (106 aa)) form a disordered region. A compositionally biased stretch (basic residues) spans 351 to 370 (SHQRSPSPRRRRSPSPKKDK). Residues 384 to 427 (SSDNHRDRDRSYRDNNRDRRDNHRDSDRDRRRHDRSPDRRRDRR) show a composition bias toward basic and acidic residues.

Belongs to the cyclophilin-type PPIase family. PPIL4 subfamily. In terms of assembly, interacts with ama-1, the catalytic subunit of the RNA polymerase II (RNA pol II) complex. As to expression, ubiquitous.

The protein resides in the nucleus. Its subcellular location is the nucleoplasm. It is found in the chromosome. It carries out the reaction [protein]-peptidylproline (omega=180) = [protein]-peptidylproline (omega=0). Functionally, probable PPIase that accelerates the folding of proteins. It catalyzes the cis-trans isomerization of proline imidic peptide bonds in oligopeptides. Involved in RNA polymerase II (RNA pol II)-mediated transcription elongation, and in primary transcript splicing, including co-transcriptional trans-splicing, in association with the catalytic subunit of the RNA pol II complex ama-1. Also plays a role in the regulation of elongation-dependent phosphorylation of ama-1 to control transcription. Involved in the transcription of several genes during embryogenesis and in particular, of genes related to developmental processes such as gastrulation, and also regulates transcription in germ cells from embryogenesis to adulthood. The polypeptide is Peptidyl-prolyl cis-trans isomerase sig-7 (Caenorhabditis elegans).